Here is a 219-residue protein sequence, read N- to C-terminus: Interleukin-12 subunit alpha (219 aa).

Positions 1-22 (MCPARSLLLVATLVLLDYLSLA) are cleaved as a signal peptide. N-linked (GlcNAc...) asparagine glycosylation is found at Asn24 and Asn93. 3 disulfide bridges follow: Cys37/Cys110, Cys64/Cys196, and Cys85/Cys123.

It belongs to the IL-6 superfamily. Heterodimer with IL12B; disulfide-linked. This heterodimer is known as interleukin IL-12. Heterodimer with EBI3/IL27B; not disulfide-linked. This heterodimer is known as interleukin IL-35. Interacts with NBR1; this interaction promotes IL-12 secretion.

Its subcellular location is the secreted. Its function is as follows. Heterodimerizes with IL12B to form the IL-12 cytokine or with EBI3/IL27B to form the IL-35 cytokine. IL-12 is primarily produced by professional antigen-presenting cells (APCs) such as B-cells and dendritic cells (DCs) as well as macrophages and granulocytes and regulates T-cell and natural killer-cell responses, induces the production of interferon-gamma (IFN-gamma), favors the differentiation of T-helper 1 (Th1) cells and is an important link between innate resistance and adaptive immunity. Mechanistically, exerts its biological effects through a receptor composed of IL12R1 and IL12R2 subunits. Binding to the receptor results in the rapid tyrosine phosphorylation of a number of cellular substrates including the JAK family kinases TYK2 and JAK2. In turn, recruited STAT4 gets phosphorylated and translocates to the nucleus where it regulates cytokine/growth factor responsive genes. As part of IL-35, plays essential roles in maintaining the immune homeostasis of the liver microenvironment and also functions as an immune-suppressive cytokine. Mediates biological events through unconventional receptors composed of IL12RB2 and gp130/IL6ST heterodimers or homodimers. Signaling requires the transcription factors STAT1 and STAT4, which form a unique heterodimer that binds to distinct DNA sites. In Papio anubis (Olive baboon), this protein is Interleukin-12 subunit alpha (IL12A).